Here is a 153-residue protein sequence, read N- to C-terminus: Small ribosomal subunit protein eS19 (153 aa).

Disordered regions lie at residues tyrosine 77 to glycine 99 and glycine 113 to aspartate 139. A compositionally biased stretch (basic and acidic residues) spans asparagine 120–leucine 133.

This sequence belongs to the eukaryotic ribosomal protein eS19 family. In terms of assembly, part of the 30S ribosomal subunit.

Its function is as follows. May be involved in maturation of the 30S ribosomal subunit. This chain is Small ribosomal subunit protein eS19, found in Haloarcula marismortui (strain ATCC 43049 / DSM 3752 / JCM 8966 / VKM B-1809) (Halobacterium marismortui).